The sequence spans 549 residues: Glucose-6-phosphate isomerase (549 aa).

Glutamate 355 serves as the catalytic Proton donor. Catalysis depends on residues histidine 386 and lysine 514.

The protein belongs to the GPI family.

It is found in the cytoplasm. The enzyme catalyses alpha-D-glucose 6-phosphate = beta-D-fructose 6-phosphate. Its pathway is carbohydrate biosynthesis; gluconeogenesis. It participates in carbohydrate degradation; glycolysis; D-glyceraldehyde 3-phosphate and glycerone phosphate from D-glucose: step 2/4. Catalyzes the reversible isomerization of glucose-6-phosphate to fructose-6-phosphate. The protein is Glucose-6-phosphate isomerase of Salmonella arizonae (strain ATCC BAA-731 / CDC346-86 / RSK2980).